A 248-amino-acid chain; its full sequence is Tetraspanin-18 (248 aa).

The Cytoplasmic segment spans residues 1–13 (MEGDCLSCMKYLM). A helical membrane pass occupies residues 14 to 34 (FVFNFFIFLGGACLLAIGIWV). Residues 35–49 (MVDPTGFREIVAANP) lie on the Extracellular side of the membrane. The helical transmembrane segment at 50–70 (LLLTGAYILLAMGGLLFLLGF) threads the bilayer. Over 71–83 (LGCCGAVRENKCL) the chain is Cytoplasmic. A helical membrane pass occupies residues 84-104 (LLFFFLFILIIFLAELSAAIL). Over 105-223 (AFIFRENLTR…TFETYVYLAG (119 aa)) the chain is Extracellular. 2 N-linked (GlcNAc...) asparagine glycosylation sites follow: Asn-111 and Asn-129. Residues 224-244 (ALAIGVLAIELFAMIFAMCLF) form a helical membrane-spanning segment. Topologically, residues 245–248 (RGIQ) are cytoplasmic.

It belongs to the tetraspanin (TM4SF) family. As to quaternary structure, interacts with ORAI1; this interaction regulates ORAI1 exit from the endoplasmic (ER), and/or Golgi, and trafficking to the cell surface. Highly expressed in primary endothelial cells. Expressed in the embryo heart. Weakly expressed the embryo skeletal muscle.

It localises to the membrane. In terms of biological role, plays a role in the cell surface localization of ORAI1 and may participate in the regulation of Ca(2+) signaling and the VWF release in response to inflammatory stimuli. In Homo sapiens (Human), this protein is Tetraspanin-18.